Reading from the N-terminus, the 425-residue chain is Probable threonylcarbamoyladenosine tRNA methylthiotransferase (425 aa).

Positions 2–110 (VKVYIENYGC…IVQAVEYAMR (109 aa)) constitute an MTTase N-terminal domain. [4Fe-4S] cluster-binding residues include Cys11, Cys47, Cys76, Cys148, Cys152, and Cys155. Residues 134–363 (SPRNVYFILP…HRIRLQISYE (230 aa)) enclose the Radical SAM core domain. A TRAM domain is found at 366–425 (RKYIGKKVKVLIHGEGKKGNVDAVTMNYKHIILPEGRKGEFREARVKNAASTYLLGEIIT).

It belongs to the methylthiotransferase family. CDKAL1 subfamily. Requires [4Fe-4S] cluster as cofactor.

The enzyme catalyses N(6)-L-threonylcarbamoyladenosine(37) in tRNA + (sulfur carrier)-SH + AH2 + 2 S-adenosyl-L-methionine = 2-methylsulfanyl-N(6)-L-threonylcarbamoyladenosine(37) in tRNA + (sulfur carrier)-H + 5'-deoxyadenosine + L-methionine + A + S-adenosyl-L-homocysteine + 2 H(+). Its function is as follows. Catalyzes the methylthiolation of N6-threonylcarbamoyladenosine (t(6)A), leading to the formation of 2-methylthio-N6-threonylcarbamoyladenosine (ms(2)t(6)A) at position 37 in tRNAs that read codons beginning with adenine. In Pyrococcus horikoshii (strain ATCC 700860 / DSM 12428 / JCM 9974 / NBRC 100139 / OT-3), this protein is Probable threonylcarbamoyladenosine tRNA methylthiotransferase.